The primary structure comprises 265 residues: Imidazole glycerol phosphate synthase subunit HisF (265 aa).

Residues Asp12 and Asp131 contribute to the active site.

Belongs to the HisA/HisF family. As to quaternary structure, heterodimer of HisH and HisF.

The protein localises to the cytoplasm. The catalysed reaction is 5-[(5-phospho-1-deoxy-D-ribulos-1-ylimino)methylamino]-1-(5-phospho-beta-D-ribosyl)imidazole-4-carboxamide + L-glutamine = D-erythro-1-(imidazol-4-yl)glycerol 3-phosphate + 5-amino-1-(5-phospho-beta-D-ribosyl)imidazole-4-carboxamide + L-glutamate + H(+). It participates in amino-acid biosynthesis; L-histidine biosynthesis; L-histidine from 5-phospho-alpha-D-ribose 1-diphosphate: step 5/9. Functionally, IGPS catalyzes the conversion of PRFAR and glutamine to IGP, AICAR and glutamate. The HisF subunit catalyzes the cyclization activity that produces IGP and AICAR from PRFAR using the ammonia provided by the HisH subunit. The chain is Imidazole glycerol phosphate synthase subunit HisF from Alkalilimnicola ehrlichii (strain ATCC BAA-1101 / DSM 17681 / MLHE-1).